The chain runs to 526 residues: Probable di/tripeptide-binding protein 5 (526 aa).

An N-terminal signal peptide occupies residues M1–A21.

The protein belongs to the bacterial solute-binding protein 5 family. As to quaternary structure, the complex is composed of two ATP-binding proteins (DppD and DppF), two transmembrane proteins (DppB and DppC) and a solute-binding protein (DppA5). Five orthologous SBPs (DppA1-A5) are present in P.aeruginosa, which increases the substrate specificity of the DppBCDF transporter.

Functionally, part of the ABC transporter DppABCDF involved in the uptake of various di/tripeptides. This is Probable di/tripeptide-binding protein 5 from Pseudomonas aeruginosa (strain UCBPP-PA14).